We begin with the raw amino-acid sequence, 240 residues long: Endonuclease V (240 aa).

Aspartate 46 and aspartate 116 together coordinate Mg(2+).

It belongs to the endonuclease V family. It depends on Mg(2+) as a cofactor.

It localises to the cytoplasm. The enzyme catalyses Endonucleolytic cleavage at apurinic or apyrimidinic sites to products with a 5'-phosphate.. Its function is as follows. DNA repair enzyme involved in the repair of deaminated bases. Selectively cleaves double-stranded DNA at the second phosphodiester bond 3' to a deoxyinosine leaving behind the intact lesion on the nicked DNA. The sequence is that of Endonuclease V from Rhodospirillum centenum (strain ATCC 51521 / SW).